Reading from the N-terminus, the 86-residue chain is Small ribosomal subunit protein bS20 (86 aa).

It belongs to the bacterial ribosomal protein bS20 family.

Binds directly to 16S ribosomal RNA. The polypeptide is Small ribosomal subunit protein bS20 (Kocuria rhizophila (strain ATCC 9341 / DSM 348 / NBRC 103217 / DC2201)).